Here is a 374-residue protein sequence, read N- to C-terminus: MENNKKNNQKQNSIDETEFPNSKVLLVSVKRTRRFLERTARELLAGGTRYIILSGLGDALPLCVQLQASLQSKNAATVVKIETSYSYFNTNYSYTPGLKIYMEKHPEFKGSRISPGYVSFCEKPDKFTPIFDETPNEYICSVNAGDNNLHVGGEGINAAFSELLSAHGHEVDKYESLFKELLSKAVKENSEKADDEVKSVLYESVEKKYPDVKLALCRVRNSLKKGSDNTTGSVFIVTFKKKFPHKKEKNMGMVYVVGPKGKNFNSVEDFLDAVHETAENLMTALCDYNGLVKREEIKHVRMNTCRICLFSGHAFKHSNASKLDVAKSILNGLAVGYRHGPSPRLNFAYDENVFKDAWIETTGLQVFNHNEKEQ.

This sequence belongs to the histone-like Alba family.

The protein resides in the cytoplasm. The protein localises to the cell cortex. It localises to the perinuclear region. In terms of biological role, possesses DNA- and RNA-binding activities. Binds to DNA with relaxed sequence specificity. May associate with the subtelomeric TARE6 repeats. Regulates the abundance of transcript sub-populations in a stage-specific manner. Regulates activation of male gametocytes. Participates in the coordination of sporozoite development in the oocyst. This is DNA/RNA-binding protein ALBA4 from Plasmodium yoelii yoelii.